The following is a 699-amino-acid chain: Polyribonucleotide nucleotidyltransferase (699 aa).

Positions 484 and 490 each coordinate Mg(2+). Residues Pro-551–Ile-610 enclose the KH domain. Positions Gly-620–Lys-688 constitute an S1 motif domain.

It belongs to the polyribonucleotide nucleotidyltransferase family. Mg(2+) serves as cofactor.

It is found in the cytoplasm. It catalyses the reaction RNA(n+1) + phosphate = RNA(n) + a ribonucleoside 5'-diphosphate. Functionally, involved in mRNA degradation. Catalyzes the phosphorolysis of single-stranded polyribonucleotides processively in the 3'- to 5'-direction. This chain is Polyribonucleotide nucleotidyltransferase, found in Syntrophotalea carbinolica (strain DSM 2380 / NBRC 103641 / GraBd1) (Pelobacter carbinolicus).